We begin with the raw amino-acid sequence, 120 residues long: Galanin-like peptide (120 aa).

A signal peptide spans 1-22 (MALTVPLIVLAVLLSLMESPAS). Residues 85 to 120 (SLGETFAKPDSGVTFVGVPDVVPWKRIRPGTTRFQI) constitute a propeptide that is removed on maturation.

It belongs to the galanin family.

The protein resides in the secreted. Functionally, hypothalamic neuropeptide which binds to the G-protein-coupled galanin receptors (GALR1, GALR2 and GALR3). Involved in a large number of putative physiological functions in CNS homeostatic processes, including the regulation of gonadotropin-releasing hormone secretion. This chain is Galanin-like peptide (GALP), found in Sus scrofa (Pig).